A 287-amino-acid chain; its full sequence is Glycine--tRNA ligase alpha subunit (287 aa).

The protein belongs to the class-II aminoacyl-tRNA synthetase family. As to quaternary structure, tetramer of two alpha and two beta subunits.

The protein resides in the cytoplasm. The enzyme catalyses tRNA(Gly) + glycine + ATP = glycyl-tRNA(Gly) + AMP + diphosphate. This chain is Glycine--tRNA ligase alpha subunit, found in Campylobacter jejuni subsp. jejuni serotype O:23/36 (strain 81-176).